The chain runs to 288 residues: MTTPQPFAHRFSQLAEQRSPFCLGIDPSRDLLTRWGLPDNARGLRDFCERVADAAGSSVAVVKPQSAFFERHGPEGLQVLQELMRRFKSVGTLTLLDVKRGDIGSTMEAYAETVFGEGSAYEADAATFTAYLGLGALLKTLERARASGAAAFLVVRSSNPEGTSLQMSRGEDGRTVAEALADGLRAFNEKPGQDAAPVAGAVMGATLPDSDRGVIERLGGALLLTPGIGAQGAGFDDLKRLFAGREAQVIPTATRSVLEAGPDTAALRQALERHLAPARAFRATARPS.

The active-site Proton donor is the Lys-99.

This sequence belongs to the OMP decarboxylase family. Type 2 subfamily.

The enzyme catalyses orotidine 5'-phosphate + H(+) = UMP + CO2. It participates in pyrimidine metabolism; UMP biosynthesis via de novo pathway; UMP from orotate: step 2/2. In Myxococcus xanthus (strain DK1622), this protein is Orotidine 5'-phosphate decarboxylase (pyrF).